The following is a 932-amino-acid chain: ER degradation-enhancing alpha-mannosidase-like protein 3 (932 aa).

A signal peptide spans 1–41 (MSEAGGRGCGSPVPQRARWRLVAATAAFCLVSATSVWTAGA). An N-linked (GlcNAc...) asparagine glycan is attached at asparagine 118. The active-site Proton donor is glutamate 146. Residue asparagine 195 is glycosylated (N-linked (GlcNAc...) asparagine). The active site involves aspartate 293. Glutamate 387 serves as the catalytic Proton donor. Glutamate 405 is an active-site residue. Threonine 491 contacts Ca(2+). N-linked (GlcNAc...) asparagine glycosylation is found at asparagine 504 and asparagine 511. The PA domain maps to 674–779 (LSKHKETRGF…KEGSIILDAI (106 aa)). Basic and acidic residues predominate over residues 790 to 799 (SDKAKDRDPE). The interval 790-908 (SDKAKDRDPE…PNVSWGKKVQ (119 aa)) is disordered. 2 N-linked (GlcNAc...) asparagine glycosylation sites follow: asparagine 810 and asparagine 814. Residues 812 to 825 (SQNQSGEQISSSSQ) show a composition bias toward low complexity. Residues 856–890 (ASISPSEQTSNPTENHETTNLNGECTDLDNQLQEQ) are compositionally biased toward polar residues. An N-linked (GlcNAc...) asparagine glycan is attached at asparagine 900. A Prevents secretion from ER motif is present at residues 929–932 (KDEL).

The protein belongs to the glycosyl hydrolase 47 family. Requires Ca(2+) as cofactor.

Its subcellular location is the endoplasmic reticulum lumen. It catalyses the reaction N(4)-(alpha-D-Man-(1-&gt;2)-alpha-D-Man-(1-&gt;2)-alpha-D-Man-(1-&gt;3)-[alpha-D-Man-(1-&gt;2)-alpha-D-Man-(1-&gt;3)-[alpha-D-Man-(1-&gt;2)-alpha-D-Man-(1-&gt;6)]-alpha-D-Man-(1-&gt;6)]-beta-D-Man-(1-&gt;4)-beta-D-GlcNAc-(1-&gt;4)-beta-D-GlcNAc)-L-asparaginyl-[protein] (N-glucan mannose isomer 9A1,2,3B1,2,3) + 4 H2O = N(4)-(alpha-D-Man-(1-&gt;3)-[alpha-D-Man-(1-&gt;3)-[alpha-D-Man-(1-&gt;6)]-alpha-D-Man-(1-&gt;6)]-beta-D-Man-(1-&gt;4)-beta-D-GlcNAc-(1-&gt;4)-beta-D-GlcNAc)-L-asparaginyl-[protein] (N-glucan mannose isomer 5A1,2) + 4 beta-D-mannose. The catalysed reaction is N(4)-(alpha-D-Man-(1-&gt;2)-alpha-D-Man-(1-&gt;2)-alpha-D-Man-(1-&gt;3)-[alpha-D-Man-(1-&gt;3)-[alpha-D-Man-(1-&gt;2)-alpha-D-Man-(1-&gt;6)]-alpha-D-Man-(1-&gt;6)]-beta-D-Man-(1-&gt;4)-beta-D-GlcNAc-(1-&gt;4)-beta-D-GlcNAc)-L-asparaginyl-[protein] (N-glucan mannose isomer 8A1,2,3B1,3) + 3 H2O = N(4)-(alpha-D-Man-(1-&gt;3)-[alpha-D-Man-(1-&gt;3)-[alpha-D-Man-(1-&gt;6)]-alpha-D-Man-(1-&gt;6)]-beta-D-Man-(1-&gt;4)-beta-D-GlcNAc-(1-&gt;4)-beta-D-GlcNAc)-L-asparaginyl-[protein] (N-glucan mannose isomer 5A1,2) + 3 beta-D-mannose. Its pathway is protein modification; protein glycosylation. Functionally, involved in endoplasmic reticulum-associated degradation (ERAD). Accelerates the glycoprotein ERAD by proteasomes, by catalyzing mannose trimming from Man8GlcNAc2 to Man7GlcNAc2 in the N-glycans. May also participate in mannose trimming from all glycoproteins and not just misfolded ones targeted to ERAD. May have alpha 1,2-mannosidase activity. This chain is ER degradation-enhancing alpha-mannosidase-like protein 3 (EDEM3), found in Homo sapiens (Human).